Reading from the N-terminus, the 134-residue chain is MPPKTRSTARRSGRRVVKKNVAQGHAYIKSTFNNTIVSITDPSGAVIAWASSGHVGFKGSRKSTPFAAQLAAENAARKAMDHGMKKVDVFVKGPGSGRETAIRSLQAAGLEVTSISDVTPQPFNGCRPPKRRRV.

The protein belongs to the universal ribosomal protein uS11 family. As to quaternary structure, part of the 30S ribosomal subunit. Interacts with proteins S7 and S18. Binds to IF-3.

Located on the platform of the 30S subunit, it bridges several disparate RNA helices of the 16S rRNA. Forms part of the Shine-Dalgarno cleft in the 70S ribosome. The chain is Small ribosomal subunit protein uS11 from Corynebacterium diphtheriae (strain ATCC 700971 / NCTC 13129 / Biotype gravis).